The primary structure comprises 100 residues: HssA/B-like protein 37 (100 aa).

2 disordered regions span residues 1–29 (MTLF…SGTS) and 67–100 (RSRG…CCGI). Positions 71–93 (SCGGNRGNGNGNGGMGGGNGSCC) are enriched in gly residues.

The protein belongs to the hssA/B family.

This is HssA/B-like protein 37 (hssl37) from Dictyostelium discoideum (Social amoeba).